Consider the following 353-residue polypeptide: Putative 3-oxoacyl-[acyl-carrier-protein] synthase 3 (353 aa).

Active-site residues include Cys-122, His-268, and Asn-299.

This sequence belongs to the thiolase-like superfamily. FabH family. As to quaternary structure, homodimer.

It is found in the cytoplasm. The enzyme catalyses malonyl-[ACP] + acetyl-CoA + H(+) = 3-oxobutanoyl-[ACP] + CO2 + CoA. The protein operates within lipid metabolism; fatty acid biosynthesis. Functionally, may catalyze the condensation reaction of fatty acid synthesis by the addition to an acyl acceptor of two carbons from malonyl-ACP. The chain is Putative 3-oxoacyl-[acyl-carrier-protein] synthase 3 from Campylobacter jejuni subsp. jejuni serotype O:2 (strain ATCC 700819 / NCTC 11168).